Reading from the N-terminus, the 666-residue chain is MRKINLLDLETTNKIAAGEVIERPFSVVKELVENSIDAGAKNITIEIEDGGQKLIKIIDDGEGIYPIDIKNAFLPHATSKINSIEDIYKISTMGFRGEALASISSVSKTKLKSRVDSYNFGKEIYIEGGKIEYLKDTGCNVGTTIEVSDLFYNVPARLKFLKSARSDSSSISDIVNRFILSHPDISFNLINKGKQSIKSYGTGNLKDSIRCVYNKTISENLINFESHKDIISVYGFIGKPEISRKSRTNQSIFVNKRYVKSKFITAAVENAFKSFLTVNSYPFFVIFIDIFPEYIDVNVHPTKSEVKFKDERAMFKTIFDAVHEAIKGELKESFTNFFNKEDINIYDSEKSITEPIKLEKEEVQIPIDLNSNNKIDIFGNNINKLPNNTELLKNIGIKEKNTLENNNDFYTSKQNEIYYANKNDECLNSCNKDNYSKIEKSLQKDNKNPDILYLNEHNRNSSPINIKENKSNNFYVDMKIIGQFNNTYILIEKDKELYIIDQHAAHEKVLFEKFKCEIEKGYVISQILLSPVVIELSEDEFNIYEENKDIFKNSGFSVETFGEYTINIKEVPLILGKPNVENLFMDILYNLKNMKSKETSTIKYNAIATLACKSAVKANDNLKEEEIKKLIEDMLILNNPYTCPHGRPTMIKFTLKDLEKKFKRIQ.

This sequence belongs to the DNA mismatch repair MutL/HexB family.

Its function is as follows. This protein is involved in the repair of mismatches in DNA. It is required for dam-dependent methyl-directed DNA mismatch repair. May act as a 'molecular matchmaker', a protein that promotes the formation of a stable complex between two or more DNA-binding proteins in an ATP-dependent manner without itself being part of a final effector complex. This is DNA mismatch repair protein MutL from Clostridium botulinum (strain ATCC 19397 / Type A).